The following is a 254-amino-acid chain: 3-deoxy-manno-octulosonate cytidylyltransferase (254 aa).

Belongs to the KdsB family.

It is found in the cytoplasm. The enzyme catalyses 3-deoxy-alpha-D-manno-oct-2-ulosonate + CTP = CMP-3-deoxy-beta-D-manno-octulosonate + diphosphate. It functions in the pathway nucleotide-sugar biosynthesis; CMP-3-deoxy-D-manno-octulosonate biosynthesis; CMP-3-deoxy-D-manno-octulosonate from 3-deoxy-D-manno-octulosonate and CTP: step 1/1. Its pathway is bacterial outer membrane biogenesis; lipopolysaccharide biosynthesis. Its function is as follows. Activates KDO (a required 8-carbon sugar) for incorporation into bacterial lipopolysaccharide in Gram-negative bacteria. This Pseudomonas putida (strain W619) protein is 3-deoxy-manno-octulosonate cytidylyltransferase.